We begin with the raw amino-acid sequence, 500 residues long: Proline--tRNA ligase (500 aa).

It belongs to the class-II aminoacyl-tRNA synthetase family. ProS type 3 subfamily. Homodimer.

The protein resides in the cytoplasm. The enzyme catalyses tRNA(Pro) + L-proline + ATP = L-prolyl-tRNA(Pro) + AMP + diphosphate. In terms of biological role, catalyzes the attachment of proline to tRNA(Pro) in a two-step reaction: proline is first activated by ATP to form Pro-AMP and then transferred to the acceptor end of tRNA(Pro). This Paramagnetospirillum magneticum (strain ATCC 700264 / AMB-1) (Magnetospirillum magneticum) protein is Proline--tRNA ligase.